Consider the following 91-residue polypeptide: Beta-microseminoprotein (91 aa).

Cystine bridges form between Cys-2/Cys-54, Cys-22/Cys-46, Cys-41/Cys-75, Cys-44/Cys-53, and Cys-68/Cys-88.

Expressed in ciliated epithelium of nidamental gland and in secretory-like cells in accessory nidamental gland (at protein level). Expressed in ovary, nidamental gland and accessory nidamental gland.

It localises to the secreted. In terms of biological role, acts as a pheromone. Triggers aggressive behaviors in males such as fin beating, lunging and grabbing. These behaviors form part of the competition for fertile females. This Doryteuthis pealeii (Longfin inshore squid) protein is Beta-microseminoprotein.